Here is a 1434-residue protein sequence, read N- to C-terminus: Probable ATP-dependent RNA helicase spindle-E (1434 aa).

Positions 66-86 (VGGPSNTKRTKTLDELESDDD) are disordered. One can recognise a Helicase ATP-binding domain in the interval 127–294 (MKAIKENPVV…FASCKSMPPV (168 aa)). ATP is bound at residue 140-147 (GETGCGKT). The DEAH box signature appears at 240–243 (DEVH). The Helicase C-terminal domain occupies 354 to 526 (QSEQSYEEAK…SSVLKAKELD (173 aa)). The 64-residue stretch at 938-1001 (ASAITKGLQL…RLMRHELRRD (64 aa)) folds into the Tudor domain.

The protein belongs to the DEAD box helicase family. DEAH subfamily.

It is found in the cytoplasm. The enzyme catalyses ATP + H2O = ADP + phosphate + H(+). Functionally, probable ATP-binding RNA helicase which plays a central role during spermatogenesis and oogenesis by repressing transposable elements and preventing their mobilization, which is essential for the germline integrity. Acts via the piRNA metabolic process, which mediates the repression of transposable elements during meiosis by forming complexes composed of piRNAs and Piwi and govern the methylation and subsequent repression of transposons. Involved in the repression of LTR retrotransposon copia. Also involved in telomere regulation by repressing specialized telomeric retroelements HeT-A, TAHRE, and TART; Drosophila telomeres being maintained by transposition of specialized telomeric retroelements. Involved in telomeric trans-silencing, a repression mechanism by which a transposon or a transgene inserted in subtelomeric heterochromatin has the capacity to repress in trans in the female germline, a homologous transposon, or transgene located in euchromatin. Involved in the repression of testis-expressed Stellate genes by the homologous Su(Ste) repeats. Required for anteroposterior and dorsoventral axis formation during oogenesis. In Drosophila grimshawi (Hawaiian fruit fly), this protein is Probable ATP-dependent RNA helicase spindle-E (spn-E).